A 61-amino-acid chain; its full sequence is Small ribosomal subunit protein uS14 (61 aa).

C24, C27, C40, and C43 together coordinate Zn(2+).

Belongs to the universal ribosomal protein uS14 family. Zinc-binding uS14 subfamily. As to quaternary structure, part of the 30S ribosomal subunit. Contacts proteins S3 and S10. Requires Zn(2+) as cofactor.

Binds 16S rRNA, required for the assembly of 30S particles and may also be responsible for determining the conformation of the 16S rRNA at the A site. The sequence is that of Small ribosomal subunit protein uS14 from Thermotoga neapolitana (strain ATCC 49049 / DSM 4359 / NBRC 107923 / NS-E).